Consider the following 336-residue polypeptide: Fructose-1,6-bisphosphatase class 1 (336 aa).

4 residues coordinate Mg(2+): Glu-90, Asp-112, Leu-114, and Asp-115. Substrate is bound by residues 115–118 (DGSS), Asn-211, and Lys-277. Glu-283 contacts Mg(2+).

This sequence belongs to the FBPase class 1 family. As to quaternary structure, homotetramer. Mg(2+) is required as a cofactor.

It localises to the cytoplasm. The enzyme catalyses beta-D-fructose 1,6-bisphosphate + H2O = beta-D-fructose 6-phosphate + phosphate. Its pathway is carbohydrate biosynthesis; gluconeogenesis. The protein is Fructose-1,6-bisphosphatase class 1 of Pseudomonas fluorescens (strain Pf0-1).